A 445-amino-acid polypeptide reads, in one-letter code: MSERKYFGTDGIRGKVGDTPITPEFVLKLGWAAGKVLARHGSRKIIIGKDTRISGYMLESALEAGLAAAGLSASFTGPMPTPAVAYLTRTFRAEAGIVISASHNPFYDNGIKFFSIDGAKLPDDVEEAIEAEMEKPLTCVESSELGKASRIIDAAGRYIEFCKGTFPSELSLKGLKIVVDCANGATYHIAPSVLRELGATVIAIGVEPDGMNINEKCGATDVRQLQERVLQEKAHVGLAFDGDGDRVMMVDHLGNKVDGDQILYIIAREGLRQGQLRGGAVGTLMSNMGLELALKQLGIPFARAKVGDRYVLEKLQELGWRIGAENSGHVILLDKTTTGDGIVAGLQVLTAIVRNSMSLHDLCSGMKLLPQILVNVRFAGEHNPLESEEVRKITEQVEVELAGRGRVLLRKSGTEPLIRVMVEGEDEQQVTALAHRIADAVKSAG.

Residue serine 102 is the Phosphoserine intermediate of the active site. 4 residues coordinate Mg(2+): serine 102, aspartate 241, aspartate 243, and aspartate 245. The residue at position 102 (serine 102) is a Phosphoserine.

The protein belongs to the phosphohexose mutase family. It depends on Mg(2+) as a cofactor. Post-translationally, activated by phosphorylation.

The catalysed reaction is alpha-D-glucosamine 1-phosphate = D-glucosamine 6-phosphate. In terms of biological role, catalyzes the conversion of glucosamine-6-phosphate to glucosamine-1-phosphate. The protein is Phosphoglucosamine mutase of Serratia proteamaculans (strain 568).